Here is a 451-residue protein sequence, read N- to C-terminus: uncharacterized protein (451 aa).

An N-terminal signal peptide occupies residues 1–22; it reads MKLKLIFSLFLVLVFCSLFVFG. N-linked (GlcNAc...) asparagine glycosylation is found at N25, N45, N209, N326, and N402.

The protein resides in the secreted. This is an uncharacterized protein from Dictyostelium discoideum (Social amoeba).